A 263-amino-acid polypeptide reads, in one-letter code: (R)-S-adenosyl-L-methionine hydrolase (263 aa).

The adenosine site is built by Asp-18, Asp-82, and Asn-181. Residues Asn-181, Tyr-221, Ser-234, Glu-239, and Met-244 each coordinate (R)-S-adenosyl-L-methionine.

This sequence belongs to the SAM hydrolase / SAM-dependent halogenase family. In terms of assembly, homotrimer.

It catalyses the reaction (R)-S-adenosyl-L-methionine + H2O = adenosine + L-methionine + H(+). Functionally, catalyzes the hydrolysis of S-adenosyl-L-methionine (SAM) into adenosine and L-methionine. Does not have chlorinase or fluorinase activity. The chain is (R)-S-adenosyl-L-methionine hydrolase from Methanocaldococcus jannaschii (strain ATCC 43067 / DSM 2661 / JAL-1 / JCM 10045 / NBRC 100440) (Methanococcus jannaschii).